Here is a 90-residue protein sequence, read N- to C-terminus: Small ribosomal subunit protein bS18 (90 aa).

The span at 1–14 (MARDNGNKDRDGKR) shows a compositional bias: basic and acidic residues. Residues 1-23 (MARDNGNKDRDGKRPNGGRNRKM) are disordered.

Belongs to the bacterial ribosomal protein bS18 family. As to quaternary structure, part of the 30S ribosomal subunit. Forms a tight heterodimer with protein bS6.

Functionally, binds as a heterodimer with protein bS6 to the central domain of the 16S rRNA, where it helps stabilize the platform of the 30S subunit. In Clostridium acetobutylicum (strain ATCC 824 / DSM 792 / JCM 1419 / IAM 19013 / LMG 5710 / NBRC 13948 / NRRL B-527 / VKM B-1787 / 2291 / W), this protein is Small ribosomal subunit protein bS18.